A 95-amino-acid chain; its full sequence is Aspartyl/glutamyl-tRNA(Asn/Gln) amidotransferase subunit C (95 aa).

It belongs to the GatC family. As to quaternary structure, heterotrimer of A, B and C subunits.

The catalysed reaction is L-glutamyl-tRNA(Gln) + L-glutamine + ATP + H2O = L-glutaminyl-tRNA(Gln) + L-glutamate + ADP + phosphate + H(+). It carries out the reaction L-aspartyl-tRNA(Asn) + L-glutamine + ATP + H2O = L-asparaginyl-tRNA(Asn) + L-glutamate + ADP + phosphate + 2 H(+). In terms of biological role, allows the formation of correctly charged Asn-tRNA(Asn) or Gln-tRNA(Gln) through the transamidation of misacylated Asp-tRNA(Asn) or Glu-tRNA(Gln) in organisms which lack either or both of asparaginyl-tRNA or glutaminyl-tRNA synthetases. The reaction takes place in the presence of glutamine and ATP through an activated phospho-Asp-tRNA(Asn) or phospho-Glu-tRNA(Gln). The polypeptide is Aspartyl/glutamyl-tRNA(Asn/Gln) amidotransferase subunit C (Rhodopseudomonas palustris (strain BisB18)).